The following is a 578-amino-acid chain: Proline--tRNA ligase (578 aa).

The protein belongs to the class-II aminoacyl-tRNA synthetase family. ProS type 1 subfamily. Homodimer.

It is found in the cytoplasm. The enzyme catalyses tRNA(Pro) + L-proline + ATP = L-prolyl-tRNA(Pro) + AMP + diphosphate. Catalyzes the attachment of proline to tRNA(Pro) in a two-step reaction: proline is first activated by ATP to form Pro-AMP and then transferred to the acceptor end of tRNA(Pro). As ProRS can inadvertently accommodate and process non-cognate amino acids such as alanine and cysteine, to avoid such errors it has two additional distinct editing activities against alanine. One activity is designated as 'pretransfer' editing and involves the tRNA(Pro)-independent hydrolysis of activated Ala-AMP. The other activity is designated 'posttransfer' editing and involves deacylation of mischarged Ala-tRNA(Pro). The misacylated Cys-tRNA(Pro) is not edited by ProRS. This is Proline--tRNA ligase from Burkholderia lata (strain ATCC 17760 / DSM 23089 / LMG 22485 / NCIMB 9086 / R18194 / 383).